The chain runs to 193 residues: dITP/XTP pyrophosphatase (193 aa).

7 to 12 (SENENK) lines the substrate pocket. Asp-65 functions as the Proton acceptor in the catalytic mechanism. Asp-65 is a binding site for Mg(2+). Substrate contacts are provided by residues Ser-66, 144–147 (FGYD), Lys-167, and 172–173 (HR).

Belongs to the HAM1 NTPase family. Homodimer. Mg(2+) is required as a cofactor.

It catalyses the reaction XTP + H2O = XMP + diphosphate + H(+). The catalysed reaction is dITP + H2O = dIMP + diphosphate + H(+). The enzyme catalyses ITP + H2O = IMP + diphosphate + H(+). Its function is as follows. Pyrophosphatase that catalyzes the hydrolysis of nucleoside triphosphates to their monophosphate derivatives, with a high preference for the non-canonical purine nucleotides XTP (xanthosine triphosphate), dITP (deoxyinosine triphosphate) and ITP. Seems to function as a house-cleaning enzyme that removes non-canonical purine nucleotides from the nucleotide pool, thus preventing their incorporation into DNA/RNA and avoiding chromosomal lesions. In Tropheryma whipplei (strain TW08/27) (Whipple's bacillus), this protein is dITP/XTP pyrophosphatase.